Consider the following 102-residue polypeptide: Large ribosomal subunit protein bL21 (102 aa).

The protein belongs to the bacterial ribosomal protein bL21 family. In terms of assembly, part of the 50S ribosomal subunit. Contacts protein L20.

In terms of biological role, this protein binds to 23S rRNA in the presence of protein L20. This is Large ribosomal subunit protein bL21 from Trichlorobacter lovleyi (strain ATCC BAA-1151 / DSM 17278 / SZ) (Geobacter lovleyi).